The following is a 417-amino-acid chain: Phosphoglycerate kinase (417 aa).

Val-23, Asp-24, Phe-25, Asn-26, Gln-39, Arg-40, Ser-63, His-64, Gly-66, Arg-67, Leu-122, Arg-123, His-170, and Arg-171 together coordinate (2R)-3-phosphoglycerate. Gly-214 lines the ADP pocket. Gly-214 is a binding site for CDP. Residues Ala-215 and Lys-216 each contribute to the AMP site. Ala-215 contributes to the ATP binding site. Position 215 (Ala-215) interacts with Mg(2+). Asp-219 lines the CDP pocket. Residue Asp-219 participates in Mg(2+) binding. Lys-220 is a binding site for AMP. Residue Lys-220 participates in ATP binding. Gly-238 is an ADP binding site. A CDP-binding site is contributed by Gly-238. AMP is bound by residues Gly-239 and Gly-313. Residues Gly-239 and Gly-313 each coordinate ATP. Gly-338, Ala-340, and Phe-343 together coordinate CDP. Position 343 (Phe-343) interacts with ADP. Glu-344 provides a ligand contact to AMP. Residues Glu-344, Asp-375, and Thr-376 each coordinate ATP. Asp-375 contacts Mg(2+).

This sequence belongs to the phosphoglycerate kinase family. As to quaternary structure, monomer. It depends on Mg(2+) as a cofactor.

It localises to the cytoplasm. Its subcellular location is the mitochondrion. It carries out the reaction (2R)-3-phosphoglycerate + ATP = (2R)-3-phospho-glyceroyl phosphate + ADP. The protein operates within carbohydrate degradation; glycolysis; pyruvate from D-glyceraldehyde 3-phosphate: step 2/5. Functionally, catalyzes one of the two ATP producing reactions in the glycolytic pathway via the reversible conversion of 1,3-diphosphoglycerate to 3-phosphoglycerate. Both L- and D- forms of purine and pyrimidine nucleotides can be used as substrates, but the activity is much lower on pyrimidines. Negatively regulates the biosynthesis of acetyl-CoA from pyruvate in the mitochondrion. The polypeptide is Phosphoglycerate kinase (pgk1) (Hypocrea rufa (Trichoderma viride)).